Reading from the N-terminus, the 576-residue chain is K(+)/H(+) antiporter NhaP2 (576 aa).

The next 13 helical transmembrane spans lie at 6 to 26 (INSFFLIGALLTAVSVLLSPM), 34 to 54 (ILLIFLAVGILAGEDGPGGIL), 58 to 78 (YSTAYLVSNLALAIILLDGGM), 87 to 107 (VALWPALSLATFGVAITTSIT), 109 to 129 (MMAAWLFDLHWLQGLLVGAIV), 163 to 183 (PMAVFLTVTLIAILANVDTEM), 185 to 205 (FSFMFISFIKQFGLGICLGLG), 219 to 239 (LADGLYSILVLSGGLIIYAAS), 242 to 262 (LGGSGILSIYLVGLFLGNKPT), 271 to 291 (VLDGMTWVSQIGMFLVLGLLL), 299 to 319 (ILIPGFALAFGMILFARPVAV), 335 to 355 (WFISWVGLRGAVPIILAVFPM), and 359 to 379 (LPGAQLYFNLAFFVVLVSLLV). An RCK C-terminal domain is found at 405–486 (SGVEIYPSSE…LEALSNLFSQ (82 aa)).

It belongs to the monovalent cation:proton antiporter 1 (CPA1) transporter (TC 2.A.36) family. NhaP2 subfamily.

It localises to the cell inner membrane. The enzyme catalyses K(+)(in) + H(+)(out) = K(+)(out) + H(+)(in). Its function is as follows. K(+)/H(+) antiporter that extrudes potassium in exchange for external protons and maintains the internal concentration of potassium under toxic levels. This is K(+)/H(+) antiporter NhaP2 from Shewanella baltica (strain OS155 / ATCC BAA-1091).